A 141-amino-acid chain; its full sequence is Hemoglobin subunit alpha (141 aa).

One can recognise a Globin domain in the interval 1–141; that stretch reads VLSAADKAHV…VSTVLTSKYR (141 aa). Ser3 is modified (phosphoserine). Residues Lys7 and Lys11 each carry the N6-succinyllysine modification. Lys16 is modified (N6-acetyllysine; alternate). At Lys16 the chain carries N6-succinyllysine; alternate. The residue at position 24 (Tyr24) is a Phosphotyrosine. Ser35 bears the Phosphoserine mark. The residue at position 40 (Lys40) is an N6-succinyllysine. Phosphoserine is present on Ser49. His58 is a binding site for O2. His87 is a binding site for heme b. Position 108 is a phosphothreonine (Thr108). Ser124 is subject to Phosphoserine. Phosphothreonine is present on residues Thr134 and Thr137. Ser138 bears the Phosphoserine mark.

It belongs to the globin family. As to quaternary structure, heterotetramer of two alpha chains and two beta chains. In terms of tissue distribution, red blood cells.

Its function is as follows. Involved in oxygen transport from the lung to the various peripheral tissues. In terms of biological role, hemopressin acts as an antagonist peptide of the cannabinoid receptor CNR1. Hemopressin-binding efficiently blocks cannabinoid receptor CNR1 and subsequent signaling. The chain is Hemoglobin subunit alpha (HBA) from Bradypus tridactylus (Pale-throated three-toed sloth).